The primary structure comprises 234 residues: ATP-dependent dethiobiotin synthetase BioD (234 aa).

An ATP-binding site is contributed by 14 to 19; that stretch reads GVGKTI. Thr-18 contributes to the Mg(2+) binding site. Lys-39 is an active-site residue. Ser-43 is a binding site for substrate. ATP-binding positions include Asp-56, 118–121, 178–179, and 208–210; these read EGAG, NH, and PWL. Mg(2+) is bound by residues Asp-56 and Glu-118.

This sequence belongs to the dethiobiotin synthetase family. Homodimer. Mg(2+) is required as a cofactor.

The protein localises to the cytoplasm. The catalysed reaction is (7R,8S)-7,8-diammoniononanoate + CO2 + ATP = (4R,5S)-dethiobiotin + ADP + phosphate + 3 H(+). It participates in cofactor biosynthesis; biotin biosynthesis; biotin from 7,8-diaminononanoate: step 1/2. Functionally, catalyzes a mechanistically unusual reaction, the ATP-dependent insertion of CO2 between the N7 and N8 nitrogen atoms of 7,8-diaminopelargonic acid (DAPA, also called 7,8-diammoniononanoate) to form a ureido ring. The chain is ATP-dependent dethiobiotin synthetase BioD from Marinobacter nauticus (strain ATCC 700491 / DSM 11845 / VT8) (Marinobacter aquaeolei).